Here is a 310-residue protein sequence, read N- to C-terminus: Acetyl-coenzyme A carboxylase carboxyl transferase subunit beta, chloroplastic (310 aa).

Residues 47–310 form the CoA carboxyltransferase N-terminal domain; sequence LWARCDNCGN…LYLSVPYNKN (264 aa). Residues cysteine 51, cysteine 54, cysteine 70, and cysteine 73 each coordinate Zn(2+). Residues 51 to 73 form a C4-type zinc finger; sequence CDNCGNMLYVKFLKQNRSVCEEC.

Belongs to the AccD/PCCB family. In terms of assembly, acetyl-CoA carboxylase is a heterohexamer composed of biotin carboxyl carrier protein, biotin carboxylase and 2 subunits each of ACCase subunit alpha and ACCase plastid-coded subunit beta (accD). Zn(2+) is required as a cofactor.

It is found in the plastid. The protein localises to the chloroplast stroma. The enzyme catalyses N(6)-carboxybiotinyl-L-lysyl-[protein] + acetyl-CoA = N(6)-biotinyl-L-lysyl-[protein] + malonyl-CoA. It functions in the pathway lipid metabolism; malonyl-CoA biosynthesis; malonyl-CoA from acetyl-CoA: step 1/1. In terms of biological role, component of the acetyl coenzyme A carboxylase (ACC) complex. Biotin carboxylase (BC) catalyzes the carboxylation of biotin on its carrier protein (BCCP) and then the CO(2) group is transferred by the transcarboxylase to acetyl-CoA to form malonyl-CoA. The sequence is that of Acetyl-coenzyme A carboxylase carboxyl transferase subunit beta, chloroplastic from Adiantum capillus-veneris (Maidenhair fern).